Consider the following 243-residue polypeptide: Probable enoyl-CoA hydratase echA6 (243 aa).

Belongs to the enoyl-CoA hydratase/isomerase family.

The enzyme catalyses a (3S)-3-hydroxyacyl-CoA = a (2E)-enoyl-CoA + H2O. It carries out the reaction a 4-saturated-(3S)-3-hydroxyacyl-CoA = a (3E)-enoyl-CoA + H2O. Its function is as follows. Could possibly oxidize fatty acids using specific components. The protein is Probable enoyl-CoA hydratase echA6 (echA6) of Mycobacterium bovis (strain ATCC BAA-935 / AF2122/97).